The following is a 1340-amino-acid chain: Iron-sulfur cluster assembly protein SufD (1340 aa).

Over residues 477–487 (NSLKHNNNNTK) the composition is skewed to low complexity. Disordered regions lie at residues 477–498 (NSLK…ERSS), 723–743 (HGKD…NYLN), 765–794 (NVST…QSTV), 835–865 (EKNE…GEKK), and 992–1055 (NIPT…NNIQ). Basic and acidic residues predominate over residues 723 to 734 (HGKDNTQHDDKN). The segment covering 782–794 (NPDTETNNEQSTV) has biased composition (polar residues). A compositionally biased stretch (polar residues) spans 1022–1037 (DNLLQNDQATNSNVEI).

It belongs to the iron-sulfur cluster assembly SufBD family. As to quaternary structure, component of a complex composed of SufB, SufC and SufD in a stoichiometric ratio of 1:2:1. Interacts with SufB. Interacts with SufC; the interaction enhances the ATPase activity of SufC.

The protein localises to the plastid. The protein resides in the apicoplast. It functions in the pathway cofactor biosynthesis; iron-sulfur cluster biosynthesis. Functionally, participates in the sulfur mobilization (SUF) pathway for iron-sulfur (Fe-S) cluster biogenesis. As part of a complex consisting of SufB-SufC(2)-SufD, involved in assembly of [4Fe-4S] clusters. Enhances the ATPase activity of SufC. This is Iron-sulfur cluster assembly protein SufD from Plasmodium berghei (strain Anka).